The chain runs to 429 residues: Integral membrane protein GPR137C (429 aa).

A compositionally biased stretch (low complexity) spans methionine 1–glycine 17. The tract at residues methionine 1–glycine 29 is disordered. Topologically, residues methionine 1–alanine 48 are lumenal. The chain crosses the membrane as a helical span at residues leucine 49–tryptophan 69. Topologically, residues arginine 70–serine 83 are cytoplasmic. Residues leucine 84–phenylalanine 104 traverse the membrane as a helical segment. Over serine 105 to histidine 120 the chain is Lumenal. The helical transmembrane segment at phenylalanine 121 to leucine 141 threads the bilayer. Over leucine 142 to histidine 167 the chain is Cytoplasmic. The chain crosses the membrane as a helical span at residues leucine 168–valine 188. The Lumenal segment spans residues histidine 189 to alanine 205. The chain crosses the membrane as a helical span at residues leucine 206–isoleucine 226. Over threonine 227–threonine 246 the chain is Cytoplasmic. A helical transmembrane segment spans residues valine 247–valine 267. Topologically, residues valine 268 to tyrosine 300 are lumenal. Asparagine 285 carries N-linked (GlcNAc...) asparagine glycosylation. The chain crosses the membrane as a helical span at residues isoleucine 301–phenylalanine 321. Over phenylalanine 322 to asparagine 429 the chain is Cytoplasmic.

It belongs to the GPR137 family.

The protein localises to the lysosome membrane. Functionally, lysosomal integral membrane protein that may regulate MTORC1 complex translocation to lysosomes. The protein is Integral membrane protein GPR137C (GPR137C) of Homo sapiens (Human).